A 296-amino-acid chain; its full sequence is 4-hydroxybenzoate octaprenyltransferase (296 aa).

The next 9 helical transmembrane spans lie at 29 to 49 (IGIY…AEGV), 55 to 75 (LFIF…INDY), 102 to 122 (ALVL…FTNA), 124 to 141 (TIWL…YPFM), 146 to 166 (FYPQ…AFTA), 169 to 189 (GSLP…TVAY), 216 to 236 (ADRL…LLAG), 239 to 259 (FELG…FVWE), and 271 to 291 (CFNA…GIVL).

It belongs to the UbiA prenyltransferase family. It depends on Mg(2+) as a cofactor.

It localises to the cell inner membrane. It carries out the reaction all-trans-octaprenyl diphosphate + 4-hydroxybenzoate = 4-hydroxy-3-(all-trans-octaprenyl)benzoate + diphosphate. It participates in cofactor biosynthesis; ubiquinone biosynthesis. Functionally, catalyzes the prenylation of para-hydroxybenzoate (PHB) with an all-trans polyprenyl group. Mediates the second step in the final reaction sequence of ubiquinone-8 (UQ-8) biosynthesis, which is the condensation of the polyisoprenoid side chain with PHB, generating the first membrane-bound Q intermediate 3-octaprenyl-4-hydroxybenzoate. This chain is 4-hydroxybenzoate octaprenyltransferase, found in Ectopseudomonas mendocina (strain ymp) (Pseudomonas mendocina).